Reading from the N-terminus, the 1608-residue chain is Protein REDUCED CHLOROPLAST COVERAGE 3 (1608 aa).

Positions 1–12 (MAPRSSKGKSNN) are enriched in basic residues. 2 disordered regions span residues 1-22 (MAPR…KKKR) and 278-303 (VSES…GRNG). One can recognise a Clu domain in the interval 288 to 564 (EDEHWGGNGG…KKETDVCGKP (277 aa)). 4 TPR repeats span residues 848 to 881 (GRTL…MIAV), 890 to 923 (ACAY…NERE), 932 to 965 (MKSY…LHFT), and 974 to 1007 (AATY…NKRL). Disordered stretches follow at residues 1194-1226 (VEES…RQPD), 1238-1292 (HNRN…ASGA), 1369-1400 (KQES…KTSD), 1466-1499 (TPRS…VSVD), and 1531-1552 (PAAL…KDSA). Positions 1217 to 1224 (GRKSRQRQ) match the Nuclear localization signal motif. Composition is skewed to polar residues over residues 1242–1265 (QDVQ…LSKS) and 1373–1385 (QESA…LTSE). The segment covering 1535-1546 (SKTSPEAESGGT) has biased composition (polar residues).

It is found in the nucleus. The protein localises to the cytoplasm. The protein resides in the cytosol. In terms of biological role, may act as the scaffold of a protein complex, which sequesters key factors that are required for the G2 to M transition in meristematic tissues. Together with REC2, REC3 and FMT/CLU, contributes to the establishment of the cellular volume devoted to the chloroplast compartment. This chain is Protein REDUCED CHLOROPLAST COVERAGE 3, found in Arabidopsis thaliana (Mouse-ear cress).